The following is a 161-amino-acid chain: Regulator of ribonuclease activity A (161 aa).

This sequence belongs to the RraA family. Homotrimer. Binds to both RNA-binding sites in the C-terminal region of Rne and to RhlB.

The protein localises to the cytoplasm. Its function is as follows. Globally modulates RNA abundance by binding to RNase E (Rne) and regulating its endonucleolytic activity. Can modulate Rne action in a substrate-dependent manner by altering the composition of the degradosome. Modulates RNA-binding and helicase activities of the degradosome. This is Regulator of ribonuclease activity A from Erwinia tasmaniensis (strain DSM 17950 / CFBP 7177 / CIP 109463 / NCPPB 4357 / Et1/99).